We begin with the raw amino-acid sequence, 1137 residues long: Bone sialoprotein-binding protein (1137 aa).

The signal sequence occupies residues 1-52 (MINRDNKKAITKKGMISNRLNKFSIRKYTVGTASILVGTTLIFGLGNQEAKA). The segment at 53–601 (AENTSTENAK…GDGTVKPEEK (549 aa)) is ligand binding A region. Disordered regions lie at residues 54-249 (ENTS…TAPT) and 675-697 (LPTKENGTTDGEKDSNGSSVTVK). A compositionally biased stretch (basic and acidic residues) spans 61–75 (AKQDEASASDNKEVV). A compositionally biased stretch (polar residues) spans 77 to 89 (ETENNSTQKNDLT). Basic and acidic residues predominate over residues 92 to 106 (IKKETNTDSHQEAKE). The segment covering 109–126 (TTSSTQQQQNNATTSTET) has biased composition (low complexity). Residues 130–145 (NIEKENVKPSTDKTAT) show a composition bias toward basic and acidic residues. Positions 158–207 (PNNTNNDVTTKPSTSEIQTTPTTPQESTNIENSQPQPTPSKVDNQVTDAT) are enriched in polar residues. Residues 216–241 (SKEELKNNPEKLKELVRNDSNTDRST) are compositionally biased toward basic and acidic residues. 3 CNA-B domains span residues 602–714 (LYKI…YKEP), 715–824 (KYNL…YKTP), and 825–935 (KYSL…EEDT). The interval 896–1112 (TQTGTNTTED…TGSENNGSNN (217 aa)) is disordered. Acidic residues-rich tracts occupy residues 903-913 (TEDDKDADGGE) and 930-1076 (YFEE…DSDS). An LPXTG sorting signal motif is present at residues 1100–1104 (LPETG). Position 1103 is a pentaglycyl murein peptidoglycan amidated threonine (Thr1103). Positions 1104–1137 (GSENNGSNNATLFGGLFAALGSLLLFGRRKKQNK) are cleaved as a propeptide — removed by sortase.

Belongs to the serine-aspartate repeat-containing protein (SDr) family.

It is found in the secreted. Its subcellular location is the cell wall. In terms of biological role, specifically interacts with bone sialoprotein (BSP), a glycoprotein of bone and dentin extracellular matrix. Could contribute to staphylococcal osteomyelitis and arthritis. In Staphylococcus aureus (strain MRSA252), this protein is Bone sialoprotein-binding protein (bbp).